The primary structure comprises 400 residues: MKILVINCGSSSLKYQLIESKDGNVLAKGLAERIGINDSLLTHNANGEKIKIKKDMKDHKDAIKLVLDALVNSDYGVIKDMSEIDAVGHRVVHGGEYFTSSVLITDDVLKAITDCIELAPLHNPANIEGIKACKQIMPDVPMVAVFDTAFHQTMPDYAYLYPIPYEYYTKYKIRKYGFHGTSHKYVSQRAAEILNKPIESLKIITCHLGNGSSIAAVKNGKSIDTSMGFTPLEGLAMGTRSGSIDPSIISYLMEKENISAEEVVNILNKKSGVYGISGISSDFRDLEDAAFKNGDKRAQLALNVFAYRVKKTIGSYAAAMGGVDVIVFTAGIGENGPEIREFILDGLEFLGFKLDKEKNKVRGEEAIISTADSKVNVMVVPTNEEYMIAKDTEKIVESLK.

N7 contacts Mg(2+). Residue K14 coordinates ATP. R90 contacts substrate. Catalysis depends on D147, which acts as the Proton donor/acceptor. ATP is bound by residues 207-211, 282-284, and 331-335; these read HLGNG, DFR, and GIGEN. E384 provides a ligand contact to Mg(2+).

It belongs to the acetokinase family. In terms of assembly, homodimer. Requires Mg(2+) as cofactor. Mn(2+) is required as a cofactor.

The protein resides in the cytoplasm. It catalyses the reaction acetate + ATP = acetyl phosphate + ADP. The protein operates within metabolic intermediate biosynthesis; acetyl-CoA biosynthesis; acetyl-CoA from acetate: step 1/2. Its function is as follows. Catalyzes the formation of acetyl phosphate from acetate and ATP. Can also catalyze the reverse reaction. In Thermoanaerobacterium thermosaccharolyticum (strain ATCC 7956 / DSM 571 / NCIMB 9385 / NCA 3814 / NCTC 13789 / WDCM 00135 / 2032) (Clostridium thermosaccharolyticum), this protein is Acetate kinase.